Consider the following 356-residue polypeptide: Peptide chain release factor 1 (356 aa).

Gln232 bears the N5-methylglutamine mark.

The protein belongs to the prokaryotic/mitochondrial release factor family. In terms of processing, methylated by PrmC. Methylation increases the termination efficiency of RF1.

The protein resides in the cytoplasm. Its function is as follows. Peptide chain release factor 1 directs the termination of translation in response to the peptide chain termination codons UAG and UAA. The sequence is that of Peptide chain release factor 1 from Thermoanaerobacter pseudethanolicus (strain ATCC 33223 / 39E) (Clostridium thermohydrosulfuricum).